Consider the following 48-residue polypeptide: uncharacterized protein (48 aa).

The interval 1 to 48 (MLFCNNNNNNNNNNNNNNNNNNNNNNNNNNNNNNNNNNNSSNNNNFSR) is disordered.

This is an uncharacterized protein from Dictyostelium discoideum (Social amoeba).